The primary structure comprises 200 residues: Lipopolysaccharide core heptose(II)-phosphate phosphatase (200 aa).

An N-terminal signal peptide occupies residues 1 to 25; that stretch reads MLAFCRSSLKSKKYFIILLALAAIA.

Belongs to the phosphoglycerate mutase family. Ais subfamily.

It localises to the periplasm. Its pathway is bacterial outer membrane biogenesis; lipopolysaccharide metabolism. Catalyzes the dephosphorylation of heptose(II) of the outer membrane lipopolysaccharide core. The sequence is that of Lipopolysaccharide core heptose(II)-phosphate phosphatase from Escherichia coli (strain SE11).